Consider the following 962-residue polypeptide: pH-response regulator protein palF/prr-3 (962 aa).

4 disordered regions span residues M1–T43, A225–S326, T568–N675, and R689–R962. The segment covering I237–P246 has biased composition (basic residues). Composition is skewed to polar residues over residues G297–H307, S314–S326, and P581–V596. Low complexity-rich tracts occupy residues P696–S722 and P738–A747. The span at T793 to L805 shows a compositional bias: basic and acidic residues. Over residues A830–P839 the composition is skewed to low complexity. Residues S840–A849 show a composition bias toward pro residues. Over residues P913–S928 the composition is skewed to low complexity. The segment covering G929 to S949 has biased composition (polar residues).

The protein belongs to the arrestin family. PalF/RIM8 subfamily.

Required for the proteolytic cleavage of the transcription factor pacc-1 in response to alkaline ambient pH. In Neurospora crassa (strain ATCC 24698 / 74-OR23-1A / CBS 708.71 / DSM 1257 / FGSC 987), this protein is pH-response regulator protein palF/prr-3 (prr-3).